Reading from the N-terminus, the 70-residue chain is ATP synthase subunit c (70 aa).

Transmembrane regions (helical) follow at residues 4–24 (IAAAIAIGLSALGAGIGNGLI) and 45–65 (IMFIGVGLVEALPIIGVVIAF).

It belongs to the ATPase C chain family. F-type ATPases have 2 components, F(1) - the catalytic core - and F(0) - the membrane proton channel. F(1) has five subunits: alpha(3), beta(3), gamma(1), delta(1), epsilon(1). F(0) has three main subunits: a(1), b(2) and c(10-14). The alpha and beta chains form an alternating ring which encloses part of the gamma chain. F(1) is attached to F(0) by a central stalk formed by the gamma and epsilon chains, while a peripheral stalk is formed by the delta and b chains.

Its subcellular location is the cell membrane. Its function is as follows. F(1)F(0) ATP synthase produces ATP from ADP in the presence of a proton or sodium gradient. F-type ATPases consist of two structural domains, F(1) containing the extramembraneous catalytic core and F(0) containing the membrane proton channel, linked together by a central stalk and a peripheral stalk. During catalysis, ATP synthesis in the catalytic domain of F(1) is coupled via a rotary mechanism of the central stalk subunits to proton translocation. Key component of the F(0) channel; it plays a direct role in translocation across the membrane. A homomeric c-ring of between 10-14 subunits forms the central stalk rotor element with the F(1) delta and epsilon subunits. This is ATP synthase subunit c from Staphylococcus aureus (strain Mu3 / ATCC 700698).